Here is a 125-residue protein sequence, read N- to C-terminus: S-adenosylmethionine decarboxylase proenzyme (125 aa).

Ser-71 functions as the Schiff-base intermediate with substrate; via pyruvic acid in the catalytic mechanism. A Pyruvic acid (Ser); by autocatalysis modification is found at Ser-71. Residue His-76 is the Proton acceptor; for processing activity of the active site. Cys-91 acts as the Proton donor; for catalytic activity in catalysis.

It belongs to the prokaryotic AdoMetDC family. Type 1 subfamily. Heterotetramer of two alpha and two beta chains arranged as a dimer of alpha/beta heterodimers. Requires pyruvate as cofactor. Is synthesized initially as an inactive proenzyme. Formation of the active enzyme involves a self-maturation process in which the active site pyruvoyl group is generated from an internal serine residue via an autocatalytic post-translational modification. Two non-identical subunits are generated from the proenzyme in this reaction, and the pyruvate is formed at the N-terminus of the alpha chain, which is derived from the carboxyl end of the proenzyme. The post-translation cleavage follows an unusual pathway, termed non-hydrolytic serinolysis, in which the side chain hydroxyl group of the serine supplies its oxygen atom to form the C-terminus of the beta chain, while the remainder of the serine residue undergoes an oxidative deamination to produce ammonia and the pyruvoyl group blocking the N-terminus of the alpha chain.

The enzyme catalyses S-adenosyl-L-methionine + H(+) = S-adenosyl 3-(methylsulfanyl)propylamine + CO2. It functions in the pathway amine and polyamine biosynthesis; S-adenosylmethioninamine biosynthesis; S-adenosylmethioninamine from S-adenosyl-L-methionine: step 1/1. Its function is as follows. Catalyzes the decarboxylation of S-adenosylmethionine to S-adenosylmethioninamine (dcAdoMet), the propylamine donor required for the synthesis of the polyamines spermine and spermidine from the diamine putrescine. This is S-adenosylmethionine decarboxylase proenzyme from Pyrobaculum islandicum (strain DSM 4184 / JCM 9189 / GEO3).